Here is a 256-residue protein sequence, read N- to C-terminus: Homeobox-leucine zipper protein HOX18 (256 aa).

Residues 52–116 (YDHGRDEEQA…GGGGGGTRKK (65 aa)) are disordered. The segment covering 102-112 (DGGSGGGGGGG) has biased composition (gly residues). Positions 112–171 (GTRKKLQLTKEQSTLLEDSFRVHNILSHAQKHELARQLKLKPRQVEVWFQNRRARTKLKQ) form a DNA-binding region, homeobox. The leucine-zipper stretch occupies residues 170–214 (KQTEVDCEFLKRCCESLTEENKQLKHELMELRRLASPAAAAAGSQ).

Belongs to the HD-ZIP homeobox family. Class II subfamily. As to expression, expressed in roots, leaf sheaths and blades and panicles.

It is found in the nucleus. In terms of biological role, probable transcription factor. This Oryza sativa subsp. japonica (Rice) protein is Homeobox-leucine zipper protein HOX18 (HOX18).